The following is a 383-amino-acid chain: Succinyl-diaminopimelate desuccinylase (383 aa).

Residue His-79 participates in Zn(2+) binding. The active site involves Asp-81. Asp-110 is a Zn(2+) binding site. Glu-141 (proton acceptor) is an active-site residue. Residues Glu-142, Glu-170, and His-355 each contribute to the Zn(2+) site.

It belongs to the peptidase M20A family. DapE subfamily. Homodimer. It depends on Zn(2+) as a cofactor. Requires Co(2+) as cofactor.

The enzyme catalyses N-succinyl-(2S,6S)-2,6-diaminopimelate + H2O = (2S,6S)-2,6-diaminopimelate + succinate. The protein operates within amino-acid biosynthesis; L-lysine biosynthesis via DAP pathway; LL-2,6-diaminopimelate from (S)-tetrahydrodipicolinate (succinylase route): step 3/3. Catalyzes the hydrolysis of N-succinyl-L,L-diaminopimelic acid (SDAP), forming succinate and LL-2,6-diaminopimelate (DAP), an intermediate involved in the bacterial biosynthesis of lysine and meso-diaminopimelic acid, an essential component of bacterial cell walls. This is Succinyl-diaminopimelate desuccinylase from Helicobacter pylori (strain HPAG1).